The following is a 742-amino-acid chain: Zinc transporter ZIP6 (742 aa).

Residues 1–353 lie on the Extracellular side of the membrane; it reads MMTFLCTRSG…QRNTPVYIAW (353 aa). Residues N94 and N127 are each glycosylated (N-linked (GlcNAc...) asparagine). 2 disordered regions span residues 148–182 and 191–210; these read PVTT…SQSD and MNQE…RSRR. A compositionally biased stretch (basic and acidic residues) spans 152–165; the sequence is KKGDMDHSVEKSDP. Positions 192–206 are enriched in polar residues; sequence NQESTTALTTPSYVT. N212, N232, and N237 each carry an N-linked (GlcNAc...) asparagine glycan. Residues 220–260 are disordered; sequence TQDHASFSPSQPNVTHSNHTHHDEDTPTHQHDDHDEHEHAR. Over residues 222–236 the composition is skewed to polar residues; the sequence is DHASFSPSQPNVTHS. Over residues 239–260 the composition is skewed to basic and acidic residues; it reads THHDEDTPTHQHDDHDEHEHAR. Residues N267 and N337 are each glycosylated (N-linked (GlcNAc...) asparagine). The tract at residues 310 to 342 is disordered; that stretch reads EDEHSDHSHHHKHHHHHHDHQHLQHPHNHTNGR. Residues 316–339 show a composition bias toward basic residues; that stretch reads HSHHHKHHHHHHDHQHLQHPHNHT. A helical transmembrane segment spans residues 354 to 374; the sequence is LGGFLSITLISLLALVGVVLI. Residues 375 to 385 lie on the Cytoplasmic side of the membrane; it reads PLMNRVCFNFL. The helical transmembrane segment at 386-406 threads the bilayer; sequence LSFLVALAVGTLSGDALLHLI. The Extracellular portion of the chain corresponds to 407–430; it reads PHSQGHHHHGHSEEHAEEEDSLRP. Residues 431-451 traverse the membrane as a helical segment; it reads VWTGLTALSGVYIMFLIEHFL. Topologically, residues 452–644 are cytoplasmic; sequence TLGKMYKDKN…LKAGMSVRQA (193 aa). A helical membrane pass occupies residues 645–665; it reads MLYNLLSALMGYLGMIIGILI. The Extracellular portion of the chain corresponds to 666-671; it reads GHYAEN. The chain crosses the membrane as a helical span at residues 672-692; it reads VATWIFALTAGLFMYVALVDM. The Cytoplasmic segment spans residues 693 to 710; the sequence is VPEMLHNDASEAGFSHYG. The chain crosses the membrane as a helical span at residues 711-731; it reads FFLLQNAGILLGFGIMLIIAV. Residues 732-742 lie on the Extracellular side of the membrane; the sequence is FEDRIQLDLGY.

Belongs to the ZIP transporter (TC 2.A.5) family. Post-translationally, cleaved on the N-terminus before locating to the plasma membrane. In terms of processing, N-glycosylated.

It is found in the cell membrane. The catalysed reaction is Zn(2+)(in) = Zn(2+)(out). Its function is as follows. Acts as a zinc-influx transporter which plays a role in zinc homeostasis and in the induction of epithelial-to-mesenchymal transition (EMT). This is Zinc transporter ZIP6 from Danio rerio (Zebrafish).